Reading from the N-terminus, the 210-residue chain is Probable septum site-determining protein MinC (210 aa).

The protein belongs to the MinC family. Interacts with MinD and FtsZ.

Functionally, cell division inhibitor that blocks the formation of polar Z ring septums. Rapidly oscillates between the poles of the cell to destabilize FtsZ filaments that have formed before they mature into polar Z rings. Prevents FtsZ polymerization. The protein is Probable septum site-determining protein MinC of Thermotoga sp. (strain RQ2).